Reading from the N-terminus, the 280-residue chain is Inner kinetochore subunit fta1 (280 aa).

It belongs to the CENP-L/IML3 family. As to quaternary structure, component of the inner kinetochore constitutive centromere-associated network (CCAN) (also known as central kinetochore Sim4 complex in fission yeast), which is composed of at least cnl2, cnp3, cnp20, fta1, fta2, fta3, fta4, fta6, fta7, mal2, mhf1, mhf2, mis6, mis15, mis17, sim4 and wip1.

It localises to the nucleus. Its subcellular location is the chromosome. It is found in the centromere. The protein resides in the kinetochore. In terms of biological role, component of the kinetochore, a multiprotein complex that assembles on centromeric DNA and attaches chromosomes to spindle microtubules, mediating chromosome segregation and sister chromatid segregation during meiosis and mitosis. Component of the inner kinetochore constitutive centromere-associated network (CCAN), which serves as a structural platform for outer kinetochore assembly. This is Inner kinetochore subunit fta1 (fta1) from Schizosaccharomyces pombe (strain 972 / ATCC 24843) (Fission yeast).